The primary structure comprises 334 residues: D-fructose 1,6-bisphosphatase class 2/sedoheptulose 1,7-bisphosphatase (334 aa).

Mn(2+) contacts are provided by Asp-33, Glu-57, Asp-85, and Glu-88. Residues 88–90 (EGT), Tyr-119, 164–166 (RAR), and 186–188 (DGD) contribute to the substrate site. Glu-213 is a Mn(2+) binding site.

It belongs to the FBPase class 2 family. In terms of assembly, homotetramer. It depends on Mn(2+) as a cofactor.

The catalysed reaction is beta-D-fructose 1,6-bisphosphate + H2O = beta-D-fructose 6-phosphate + phosphate. The enzyme catalyses D-sedoheptulose 1,7-bisphosphate + H2O = D-sedoheptulose 7-phosphate + phosphate. Its pathway is carbohydrate biosynthesis; Calvin cycle. Functionally, catalyzes the hydrolysis of fructose 1,6-bisphosphate (Fru 1,6-P2) and sedoheptulose 1,7-bisphosphate (Sed 1,7-P2) to fructose 6-phosphate and sedoheptulose 7-phosphate, respectively. In Synechococcus sp. (strain CC9605), this protein is D-fructose 1,6-bisphosphatase class 2/sedoheptulose 1,7-bisphosphatase.